The following is a 321-amino-acid chain: Cilia- and flagella-associated protein 161 (321 aa).

Residues 275 to 321 form a disordered region; sequence LSTMLDLPKPPAEDTRALEQEREQVSDPGARSTPDARGCVPQCTLPM. Residues 285–299 are compositionally biased toward basic and acidic residues; sequence PAEDTRALEQEREQV.

Microtubule inner protein component of sperm flagellar doublet microtubules. Expressed in trachea multiciliated cells.

The protein localises to the cytoplasm. It is found in the cytoskeleton. The protein resides in the cilium axoneme. Its subcellular location is the flagellum axoneme. In terms of biological role, microtubule inner protein (MIP) part of the dynein-decorated doublet microtubules (DMTs) in cilia axoneme, which is required for motile cilia beating. The polypeptide is Cilia- and flagella-associated protein 161 (Bos taurus (Bovine)).